Here is a 79-residue protein sequence, read N- to C-terminus: Cyclin-dependent kinases regulatory subunit 2 (79 aa).

Belongs to the CKS family. Forms a homohexamer that can probably bind six kinase subunits.

Functionally, binds to the catalytic subunit of the cyclin dependent kinases and is essential for their biological function. The chain is Cyclin-dependent kinases regulatory subunit 2 (cks2) from Xenopus laevis (African clawed frog).